Consider the following 338-residue polypeptide: UDP-N-acetylenolpyruvoylglucosamine reductase (338 aa).

In terms of domain architecture, FAD-binding PCMH-type spans 17–188 (IAARTDWWID…MYVDYRLRLK (172 aa)). Arg-164 is an active-site residue. Ser-237 acts as the Proton donor in catalysis. Residue Glu-333 is part of the active site.

Belongs to the MurB family. FAD is required as a cofactor.

It localises to the cytoplasm. It carries out the reaction UDP-N-acetyl-alpha-D-muramate + NADP(+) = UDP-N-acetyl-3-O-(1-carboxyvinyl)-alpha-D-glucosamine + NADPH + H(+). The protein operates within cell wall biogenesis; peptidoglycan biosynthesis. Its function is as follows. Cell wall formation. This is UDP-N-acetylenolpyruvoylglucosamine reductase from Porphyromonas gingivalis (strain ATCC BAA-308 / W83).